A 234-amino-acid polypeptide reads, in one-letter code: Large ribosomal subunit protein uL1 (234 aa).

This sequence belongs to the universal ribosomal protein uL1 family. In terms of assembly, part of the 50S ribosomal subunit.

In terms of biological role, binds directly to 23S rRNA. The L1 stalk is quite mobile in the ribosome, and is involved in E site tRNA release. Protein L1 is also a translational repressor protein, it controls the translation of the L11 operon by binding to its mRNA. This Geobacter metallireducens (strain ATCC 53774 / DSM 7210 / GS-15) protein is Large ribosomal subunit protein uL1.